Consider the following 467-residue polypeptide: Retinoic acid receptor RXR-alpha (467 aa).

The disordered stretch occupies residues 1–61; it reads MDTKHFLPLD…LHSPISTLSS (61 aa). Residues 1-139 form a modulating region; that stretch reads MDTKHFLPLD…GNMSSFTKHI (139 aa). Residue Lys4 forms a Glycyl lysine isopeptide (Lys-Gly) (interchain with G-Cter in SUMO2) linkage. Residues Ser22 and Ser28 each carry the phosphoserine modification. Positions 32–55 are enriched in low complexity; that stretch reads PSLHPSLGPGLGSPLGSPGQLHSP. Phosphoserine; by MAPK8 and MAPK9 is present on residues Ser61 and Ser75. The tract at residues 79-109 is disordered; it reads PHSMSVPTTPTLGFETGSPQLNSPMNPVSSS. Over residues 83–109 the composition is skewed to polar residues; that stretch reads SVPTTPTLGFETGSPQLNSPMNPVSSS. Thr87 bears the Phosphothreonine; by MAPK8 and MAPK9 mark. A Glycyl lysine isopeptide (Lys-Gly) (interchain with G-Cter in SUMO) cross-link involves residue Lys113. Ser134 carries the post-translational modification Phosphoserine. Residues Cys140 and Cys143 each coordinate Zn(2+). The segment at 140-160 adopts an NR C4-type zinc-finger fold; sequence CAICGDRSSGKHYGVYSCEGC. Positions 140–205 form a DNA-binding region, nuclear receptor; it reads CAICGDRSSG…RYQKCLAMGM (66 aa). N6-acetyllysine is present on Lys150. Residues Cys157 and Cys160 each contribute to the Zn(2+) site. Positions 165–170 are nuclear localization signal; the sequence is KRTVRK. Cys176, Cys182, Cys192, and Cys195 together coordinate Zn(2+). The NR C4-type zinc finger occupies 176 to 200; the sequence is CRDNKDCLIDKRQRNRCQYCRYQKC. The hinge stretch occupies residues 206 to 229; sequence KREAVQEERQRGKDRNENEVESTS. Residues 211–223 show a composition bias toward basic and acidic residues; sequence QEERQRGKDRNEN. The segment at 211 to 233 is disordered; it reads QEERQRGKDRNENEVESTSSANE. The NR LBD domain maps to 232-463; the sequence is NEDMPVEKIL…TFLMEMLEAP (232 aa). Ser264 carries the post-translational modification Phosphoserine. Ser265 carries the phosphoserine; by MAPK8 and MAPK9 modification. Residues Arg321 and Ala332 each contribute to the 9-cis-retinoate site. Residues Arg321 and Ala332 each contribute to the all-trans-retinoate site. The interval 353-373 is required for nuclear export; the sequence is RVLTELVSKMRDMQMDKTELG.

This sequence belongs to the nuclear hormone receptor family. NR2 subfamily. As to quaternary structure, homodimer. Heterodimer (via C-terminus) with RARA; required for ligand-dependent retinoic acid receptor transcriptional activity; association with RARA is enhanced by pulsatile shear stress. Heterodimer with PPARA (via the leucine-like zipper in the LBD); the interaction is required for PPARA transcriptional activity. Heterodimerizes with PPARG. Heterodimerizes (via NR LBD) with RARB. Heterodimerizes with NR1H4; the heterodimerization enhances the binding affinity for LXXLL motifs from coactivators. Interacts with NCOA3 and NCOA6 coactivators. Interacts with FAM120B. Interacts with coactivator PELP1, SENP6, SFPQ, DNTTIP2 and RNF8. Interacts with PRMT2. Interacts with ASXL1. Interacts with BHLHE40/DEC1, BHLHE41/DEC2, MED1, NCOR1 and NCOR2. Interacts in a ligand-dependent fashion with MED1 and NCOA1. Interacts with VDR. Interacts with EP300; the interaction is decreased by 9-cis retinoic acid. Heterodimer (via C-terminus) with NR4A1 (DNA-binding domain); the interaction is enhanced by 9-cis retinoic acid. NR4A1 competes with EP300 for interaction with RXRA and thereby attenuates EP300 mediated acetylation of RXRA. In the absence of hormonal ligand, interacts with TACC1. Interacts ith IGFBP3. Phosphorylated on serine and threonine residues mainly in the N-terminal modulating domain. Constitutively phosphorylated on Ser-22 in the presence or absence of ligand. Under stress conditions, hyperphosphorylated by activated JNK on Ser-61, Ser-75, Thr-87 and Ser-265. Phosphorylated on Ser-28, in vitro, by PKA. This phosphorylation is required for repression of cAMP-mediated transcriptional activity of RARA. In terms of processing, ubiquitinated by UBR5, leading to its degradation: UBR5 specifically recognizes and binds ligand-bound RXRA when it is not associated with coactivators (NCOAs). In presence of NCOAs, the UBR5-degron is not accessible, preventing its ubiquitination and degradation. Post-translationally, sumoylation negatively regulates transcriptional activity. Desumoylated specifically by SENP6. Acetylated by EP300; acetylation enhances DNA binding and transcriptional activity. In terms of tissue distribution, expressed in the adrenal gland with main expression in the zona fasciculata and medulla (at protein level). Expressed in aortic endothelial cells, with high expression in the descending thoracic aorta and the outer curvature of the aortic arch, where pulsatory shear stress exists, but very low in the inner curvature of the aortic arch, where oscillatory shear stress prevails (at protein level).

It localises to the nucleus. Its subcellular location is the cytoplasm. The protein resides in the mitochondrion. Receptor for retinoic acid that acts as a transcription factor. Forms homo- or heterodimers with retinoic acid receptors (RARs) and binds to target response elements in response to their ligands, all-trans or 9-cis retinoic acid, to regulate gene expression in various biological processes. The RAR/RXR heterodimers bind to the retinoic acid response elements (RARE) composed of tandem 5'-AGGTCA-3' sites known as DR1-DR5 to regulate transcription. The high affinity ligand for retinoid X receptors (RXRs) is 9-cis retinoic acid. In the absence of ligand, the RXR-RAR heterodimers associate with a multiprotein complex containing transcription corepressors that induce histone deacetylation, chromatin condensation and transcriptional suppression. On ligand binding, the corepressors dissociate from the receptors and coactivators are recruited leading to transcriptional activation. Serves as a common heterodimeric partner for a number of nuclear receptors, such as RARA, RARB and PPARA. The RXRA/RARB heterodimer can act as a transcriptional repressor or transcriptional activator, depending on the RARE DNA element context. The RXRA/PPARA heterodimer is required for PPARA transcriptional activity on fatty acid oxidation genes such as ACOX1 and the P450 system genes. Together with RARA, positively regulates microRNA-10a expression, thereby inhibiting the GATA6/VCAM1 signaling response to pulsatile shear stress in vascular endothelial cells. Acts as an enhancer of RARA binding to RARE DNA element. May facilitate the nuclear import of heterodimerization partners such as VDR and NR4A1. Promotes myelin debris phagocytosis and remyelination by macrophages. Plays a role in the attenuation of the innate immune system in response to viral infections, possibly by negatively regulating the transcription of antiviral genes such as type I IFN genes. Involved in the regulation of calcium signaling by repressing ITPR2 gene expression, thereby controlling cellular senescence. This is Retinoic acid receptor RXR-alpha (Rxra) from Rattus norvegicus (Rat).